The primary structure comprises 469 residues: Probable monogalactosyldiacylglycerol synthase 2, chloroplastic (469 aa).

Residues Met-1–Gly-42 constitute a chloroplast transit peptide.

Belongs to the glycosyltransferase 28 family.

It is found in the plastid. Its subcellular location is the chloroplast membrane. It catalyses the reaction a 1,2-diacyl-sn-glycerol + UDP-alpha-D-galactose = a 1,2-diacyl-3-O-(beta-D-galactosyl)-sn-glycerol + UDP + H(+). Its function is as follows. Involved in the synthesis of the major structural component of photosynthetic membranes. This is Probable monogalactosyldiacylglycerol synthase 2, chloroplastic (MGD2) from Oryza sativa subsp. japonica (Rice).